The primary structure comprises 235 residues: Purine nucleoside phosphorylase DeoD-type (235 aa).

A purine D-ribonucleoside is bound at residue H4. Phosphate contacts are provided by residues G20, R24, R43, and 87–90; that span reads RVGT. A purine D-ribonucleoside-binding positions include 180 to 182 and 204 to 205; these read EME and SD. D205 (proton donor) is an active-site residue.

It belongs to the PNP/UDP phosphorylase family. As to quaternary structure, homohexamer; trimer of homodimers.

The enzyme catalyses a purine D-ribonucleoside + phosphate = a purine nucleobase + alpha-D-ribose 1-phosphate. The catalysed reaction is a purine 2'-deoxy-D-ribonucleoside + phosphate = a purine nucleobase + 2-deoxy-alpha-D-ribose 1-phosphate. In terms of biological role, catalyzes the reversible phosphorolytic breakdown of the N-glycosidic bond in the beta-(deoxy)ribonucleoside molecules, with the formation of the corresponding free purine bases and pentose-1-phosphate. The polypeptide is Purine nucleoside phosphorylase DeoD-type (Oceanobacillus iheyensis (strain DSM 14371 / CIP 107618 / JCM 11309 / KCTC 3954 / HTE831)).